A 749-amino-acid polypeptide reads, in one-letter code: Ribosomal RNA large subunit methyltransferase K/L (749 aa).

Residues 43–154 enclose the THUMP domain; the sequence is QGYKVCLWSR…KDKATIYLDL (112 aa). The segment at 386 to 406 is disordered; that stretch reads VEPVAPKKTNKETPEPINPWT.

This sequence belongs to the methyltransferase superfamily. RlmKL family.

It localises to the cytoplasm. The catalysed reaction is guanosine(2445) in 23S rRNA + S-adenosyl-L-methionine = N(2)-methylguanosine(2445) in 23S rRNA + S-adenosyl-L-homocysteine + H(+). It carries out the reaction guanosine(2069) in 23S rRNA + S-adenosyl-L-methionine = N(2)-methylguanosine(2069) in 23S rRNA + S-adenosyl-L-homocysteine + H(+). Functionally, specifically methylates the guanine in position 2445 (m2G2445) and the guanine in position 2069 (m7G2069) of 23S rRNA. This chain is Ribosomal RNA large subunit methyltransferase K/L, found in Psychromonas ingrahamii (strain DSM 17664 / CCUG 51855 / 37).